The following is a 374-amino-acid chain: Polar flagellin E (374 aa).

Residues Ser-102–Ala-126 are a coiled coil.

The protein belongs to the bacterial flagellin family. In terms of assembly, heteromer of multiple flagellin subunits including FlaA, FlaB/D, FlaC, FlaE and FlaF.

Its subcellular location is the secreted. The protein resides in the bacterial flagellum. Flagellin is the subunit protein which polymerizes to form the filaments of bacterial flagella. The protein is Polar flagellin E (flaE) of Vibrio parahaemolyticus serotype O3:K6 (strain RIMD 2210633).